Reading from the N-terminus, the 533-residue chain is Intestinal-type alkaline phosphatase (533 aa).

The N-terminal stretch at 1–19 (MQGACVLLLLGLHLQLSLG) is a signal peptide. Aspartate 61 serves as a coordination point for Mg(2+). Zn(2+)-binding residues include aspartate 61 and serine 111. Serine 111 (phosphoserine intermediate) is an active-site residue. Residues cysteine 140 and cysteine 202 are joined by a disulfide bond. Serine 174 serves as a coordination point for Mg(2+). Position 235 (glutamate 235) interacts with Ca(2+). Asparagine 268 carries an N-linked (GlcNAc...) asparagine glycan. 3 residues coordinate Ca(2+): phenylalanine 288, glutamate 289, and aspartate 304. Glutamate 330 is a binding site for Mg(2+). Zn(2+)-binding residues include aspartate 335, histidine 339, aspartate 376, and histidine 377. N-linked (GlcNAc...) asparagine glycosylation is present at asparagine 429. Histidine 451 is a binding site for Zn(2+). Cysteine 486 and cysteine 493 form a disulfide bridge. The GPI-anchor amidated aspartate moiety is linked to residue aspartate 506. Residues 507–533 (AAHLAASPPPLALLAGAMLLLLAPTLY) constitute a propeptide, removed in mature form.

Belongs to the alkaline phosphatase family. In terms of assembly, homodimer. Mg(2+) is required as a cofactor. It depends on Zn(2+) as a cofactor. Ca(2+) serves as cofactor.

It localises to the cell membrane. It catalyses the reaction a phosphate monoester + H2O = an alcohol + phosphate. Functionally, alkaline phosphatase that can hydrolyze various phosphate compounds. This is Intestinal-type alkaline phosphatase (ALPI) from Bos taurus (Bovine).